A 222-amino-acid polypeptide reads, in one-letter code: Adenylate kinase (222 aa).

Residue Ser2 is a propeptide, removed in mature form. N-acetylserine is present on residues Ser2 and Ser3. 16 to 21 (GAGKGT) provides a ligand contact to ATP. Residues 36 to 65 (ATGDMLRSQIAKGTQLGLEAKKIMDQGGLV) form an NMP region. AMP is bound by residues Thr37, Arg42, 63-65 (GLV), 92-95 (GFPR), and Gln99. Residues 133 to 170 (GRLIHPASGRSYHKIFNPPKEDMKDDVTGEALVQRSDD) form an LID region. ATP contacts are provided by residues Arg134 and 143-144 (SY). AMP-binding residues include Arg167 and Arg178. Gln206 lines the ATP pocket.

The protein belongs to the adenylate kinase family. AK2 subfamily. Monomer.

It localises to the cytoplasm. The protein localises to the cytosol. Its subcellular location is the mitochondrion intermembrane space. The catalysed reaction is AMP + ATP = 2 ADP. Its function is as follows. Catalyzes the reversible transfer of the terminal phosphate group between ATP and AMP. Plays an important role in cellular energy homeostasis and in adenine nucleotide metabolism. Adenylate kinase activity is critical for regulation of the phosphate utilization and the AMP de novo biosynthesis pathways. The sequence is that of Adenylate kinase from Saccharomyces cerevisiae (strain YJM789) (Baker's yeast).